We begin with the raw amino-acid sequence, 75 residues long: Small ribosomal subunit protein eS17 (75 aa).

Belongs to the eukaryotic ribosomal protein eS17 family.

The polypeptide is Small ribosomal subunit protein eS17 (Thermoplasma acidophilum (strain ATCC 25905 / DSM 1728 / JCM 9062 / NBRC 15155 / AMRC-C165)).